Reading from the N-terminus, the 322-residue chain is tRNA-dihydrouridine(16) synthase (322 aa).

Residues 8–10 and glutamine 69 contribute to the FMN site; that span reads PME. The active-site Proton donor is cysteine 99. FMN is bound by residues lysine 140, 200–202, and 224–225; these read NGD and GR.

It belongs to the Dus family. DusC subfamily. Requires FMN as cofactor.

It carries out the reaction 5,6-dihydrouridine(16) in tRNA + NADP(+) = uridine(16) in tRNA + NADPH + H(+). The catalysed reaction is 5,6-dihydrouridine(16) in tRNA + NAD(+) = uridine(16) in tRNA + NADH + H(+). Catalyzes the synthesis of 5,6-dihydrouridine (D), a modified base found in the D-loop of most tRNAs, via the reduction of the C5-C6 double bond in target uridines. Specifically modifies U16 in tRNAs. The protein is tRNA-dihydrouridine(16) synthase of Cupriavidus necator (strain ATCC 17699 / DSM 428 / KCTC 22496 / NCIMB 10442 / H16 / Stanier 337) (Ralstonia eutropha).